We begin with the raw amino-acid sequence, 235 residues long: Protein Thf1 (235 aa).

Residues 179 to 228 (LNLSSDKLQKDLDLYRSNVDKMGQLLAVIEDALEAERKKREKAKQEVATT) adopt a coiled-coil conformation.

The protein belongs to the THF1 family.

In terms of biological role, may be involved in photosynthetic membrane biogenesis. The polypeptide is Protein Thf1 (Rippkaea orientalis (strain PCC 8801 / RF-1) (Cyanothece sp. (strain PCC 8801))).